The following is a 302-amino-acid chain: Urease accessory protein UreD (302 aa).

Belongs to the UreD family. In terms of assembly, ureD, UreF and UreG form a complex that acts as a GTP-hydrolysis-dependent molecular chaperone, activating the urease apoprotein by helping to assemble the nickel containing metallocenter of UreC. The UreE protein probably delivers the nickel.

Its subcellular location is the cytoplasm. In terms of biological role, required for maturation of urease via the functional incorporation of the urease nickel metallocenter. In Pseudoalteromonas translucida (strain TAC 125), this protein is Urease accessory protein UreD.